Consider the following 600-residue polypeptide: Putative heme-binding protein NP_2262A (600 aa).

His-180 contacts heme. Residues 261–289 (TSETGHGGADSQTSSESSGGRPSTDPSHD) are disordered. A compositionally biased stretch (polar residues) spans 270–285 (DSQTSSESSGGRPSTD). The ABM domain occupies 510–598 (GTMGMFYTVK…VLADRPRHVF (89 aa)).

This sequence in the N-terminal section; belongs to the ChdC family.

This chain is Putative heme-binding protein NP_2262A, found in Natronomonas pharaonis (strain ATCC 35678 / DSM 2160 / CIP 103997 / JCM 8858 / NBRC 14720 / NCIMB 2260 / Gabara) (Halobacterium pharaonis).